A 498-amino-acid polypeptide reads, in one-letter code: Glycerol kinase (498 aa).

Thr12 contributes to the ADP binding site. Positions 12, 13, and 14 each coordinate ATP. Sn-glycerol 3-phosphate is bound at residue Thr12. Arg16 is a binding site for ADP. Positions 82, 83, 134, and 244 each coordinate sn-glycerol 3-phosphate. Glycerol is bound by residues Arg82, Glu83, Tyr134, Asp244, and Gln245. Thr266 and Gly310 together coordinate ADP. Positions 266, 310, 314, and 411 each coordinate ATP. The ADP site is built by Gly411 and Asn415.

It belongs to the FGGY kinase family.

It carries out the reaction glycerol + ATP = sn-glycerol 3-phosphate + ADP + H(+). Its pathway is polyol metabolism; glycerol degradation via glycerol kinase pathway; sn-glycerol 3-phosphate from glycerol: step 1/1. Its activity is regulated as follows. Inhibited by fructose 1,6-bisphosphate (FBP). In terms of biological role, key enzyme in the regulation of glycerol uptake and metabolism. Catalyzes the phosphorylation of glycerol to yield sn-glycerol 3-phosphate. In Azorhizobium caulinodans (strain ATCC 43989 / DSM 5975 / JCM 20966 / LMG 6465 / NBRC 14845 / NCIMB 13405 / ORS 571), this protein is Glycerol kinase.